The primary structure comprises 721 residues: MKKFKLLLLALMCVAFLPSKADEGMWLLQLMQEQHLADRMKAQGLLLEADDIYNPNRVSLKDAVGIFGGGCTGEIISPDGLILTNHHCGYGAIQQHSSVEHDYLTDGFWAKSRKEELPTPGLKFKFVERIVDVTDKVNNKVKSGEVKEEETFEYDFLKKLADEELKASDLNGKAGISAQALPFYAGNKFYLIYLKTYSDVRMVAAPPSSIGKFGGETDNWMWPRHTCDFSVFRIYADANGEPAEYNENNVPLKAKKHLAISLKGINEGDYAMIMGFPGSTNRYLTQSEVKQRMHSTNEPRIRIRGVRQDVLKKEMAASDKVRIQYASKYAGSSNYWKNSIGMNKAIIDNKVLETKAEQEAKFAAFAKAKGNTDYEKVVSEIDAAIEKSNPILYNYTCFREVFQGGIEFGTPYLILDKLKDAIKNKDKEAINKNIETLKKVYADIHNKDYDHEVDRKVAKALLPLYAEMVPADALPAFYTTIQKDFKGNYDAYVDHCYDNSIFSNEANFNKFIKKPTVKAIEKDPMTAYVRAKYDLMDKLGNELAESMKGMDLLHKTYVRGLCEMYSPEPKAPDANFTIRLTYGNVKSYNPKDGVHYKYYTTLKGVMEKEDPTNPEFVVPAKLKELYEAKDFGRYALPNGDMPACFLTTNDITGGNSGSPVINGNGELIGAAFDGNWESLSGDINFDNNLQRCIAVDIRYVLFIIDKLGGCKHLIDEMTIVE.

Positions 1-21 are cleaved as a signal peptide; it reads MKKFKLLLLALMCVAFLPSKA. Active-site charge relay system residues include H87, D228, and S656.

It belongs to the peptidase S46 family.

Functionally, catalyzes the removal of dipeptides from the N-terminus of oligopeptides. Most potently cleaves the synthetic substrate Met-Leu-methylcoumaryl-7-amide (Met-Leu-MCA), followed by Leu-Arg-MCA, while this enzyme does not hydrolyze Gly-Arg-, Gly-Gly-, Lys-Lys-, or Gly-Pro-MCA. In Phocaeicola vulgatus (strain ATCC 8482 / DSM 1447 / JCM 5826 / CCUG 4940 / NBRC 14291 / NCTC 11154) (Bacteroides vulgatus), this protein is Dipeptidyl-peptidase 7 (dpp7).